Consider the following 720-residue polypeptide: MFTKHSVEIDWGGRPLKLETGKIARQADGAVVATYGETVVLATVVAAKSPREGVDFLPLTVDYQEKAYAAGRIPGGYFKREGRPTEKETLVSRLIDRPIRPLFVDAWRNETQVIVTTLSHDMENDPDILAMVAASAALTLSGVPFKGPIGAARVGFANDEYILNPTLDEMTDTQLDLVVAGTSDAVLMVESEAKELNEDIMLGAVMFGHRHFQPVINAIIELAEKAAKEPRDVAIIDNSAIEKEMLGIAEQDLRKAYAIPVKQERYAAVAAVKEKVMAYFFPEGQEPKYEKLRVADVFKELEAKIVRWNILDTGRRIDGRDVKTVRNIVCEVGVLPRAHGSALFTRGETQALVVTTLGTGEDEQYIDALSGTYKETFLLHYNFPPYSVGETGRLGGTKRREIGHGKLAWRAIHPVLPPHHEFPYTTRVVSEVTESNGSSSMATVCGSSLALMDAGVPLKRPTAGIAMGLILEGSRYAVLSDILGDEDHLGDMDFKVAGTESGITSLQMDIKIEGITEEIMRVALGQAREGRIHILGEMSKALTAARAELGEYAPRIETFKIPTDKIREVIGTGGKVIREIVEKTGAKVNIEDDGTVKVASSDGEAMKAAIKWIKSIASDPEIGQIYDGTVVKVMEFGAFVNFFGTRDGLVHISQLADKRVQKTTDVVKEGDKVKVKLLGFDDRGKTRLSMKAVDQTTGEDLEAKQKAEGGAEAPREAAGE.

Mg(2+)-binding residues include Asp-487 and Asp-493. Residues 554–613 (PRIETFKIPTDKIREVIGTGGKVIREIVEKTGAKVNIEDDGTVKVASSDGEAMKAAIKWI) enclose the KH domain. Residues 623–691 (GQIYDGTVVK…DRGKTRLSMK (69 aa)) form the S1 motif domain. The tract at residues 692–720 (AVDQTTGEDLEAKQKAEGGAEAPREAAGE) is disordered. Positions 701 to 720 (LEAKQKAEGGAEAPREAAGE) are enriched in basic and acidic residues.

This sequence belongs to the polyribonucleotide nucleotidyltransferase family. Mg(2+) serves as cofactor.

It is found in the cytoplasm. It carries out the reaction RNA(n+1) + phosphate = RNA(n) + a ribonucleoside 5'-diphosphate. In terms of biological role, involved in mRNA degradation. Catalyzes the phosphorolysis of single-stranded polyribonucleotides processively in the 3'- to 5'-direction. The chain is Polyribonucleotide nucleotidyltransferase from Bradyrhizobium sp. (strain BTAi1 / ATCC BAA-1182).